We begin with the raw amino-acid sequence, 737 residues long: Polyribonucleotide nucleotidyltransferase (737 aa).

Asp-489 and Asp-495 together coordinate Mg(2+). A KH domain is found at 556–615 (PKIDTIKIDVDKIKIVIGKGGETIDKIIAETGVKIDIDEEGNVSIYSSDQDAINRAKEII). The region spanning 625–693 (DEVYRAKVVR…EKGRIDASMK (69 aa)) is the S1 motif domain. Positions 691 to 737 (SMKALLPRPPKPEHDEKGEKSERPHRPRHHKDHKPKKEFTETPKDSE) are disordered. The segment covering 700-714 (PKPEHDEKGEKSERP) has biased composition (basic and acidic residues). The segment covering 715 to 724 (HRPRHHKDHK) has biased composition (basic residues). Basic and acidic residues predominate over residues 725 to 737 (PKKEFTETPKDSE).

It belongs to the polyribonucleotide nucleotidyltransferase family. Mg(2+) is required as a cofactor.

Its subcellular location is the cytoplasm. It catalyses the reaction RNA(n+1) + phosphate = RNA(n) + a ribonucleoside 5'-diphosphate. Its function is as follows. Involved in mRNA degradation. Catalyzes the phosphorolysis of single-stranded polyribonucleotides processively in the 3'- to 5'-direction. This chain is Polyribonucleotide nucleotidyltransferase, found in Streptococcus pneumoniae (strain Taiwan19F-14).